Here is a 347-residue protein sequence, read N- to C-terminus: NADH-ubiquinone oxidoreductase chain 2 (347 aa).

Transmembrane regions (helical) follow at residues 1-21 (MNPL…LIVM), 25-45 (HWFM…PLLT), 67-87 (SMLL…WSIM), 111-131 (FHFW…LILL), 144-164 (MIMP…SIAI), 178-198 (IMAY…AYNP), 201-221 (TLLN…LLMI), 237-257 (LPLI…LPPL), 274-294 (SSII…YFYT), and 326-346 (LPLM…MPIL).

Belongs to the complex I subunit 2 family. In terms of assembly, core subunit of respiratory chain NADH dehydrogenase (Complex I) which is composed of 45 different subunits. Interacts with TMEM242.

It is found in the mitochondrion inner membrane. It catalyses the reaction a ubiquinone + NADH + 5 H(+)(in) = a ubiquinol + NAD(+) + 4 H(+)(out). Its function is as follows. Core subunit of the mitochondrial membrane respiratory chain NADH dehydrogenase (Complex I) which catalyzes electron transfer from NADH through the respiratory chain, using ubiquinone as an electron acceptor. Essential for the catalytic activity and assembly of complex I. This chain is NADH-ubiquinone oxidoreductase chain 2, found in Myotis simus (Velvety myotis).